We begin with the raw amino-acid sequence, 403 residues long: uncharacterized protein (403 aa).

Positions 55 to 88 (LTGSPNPQATPKQENKSNFFSEKQSVRENGNSSA) are enriched in polar residues. The tract at residues 55-95 (LTGSPNPQATPKQENKSNFFSEKQSVRENGNSSAGEKKQKW) is disordered. The residue at position 58 (serine 58) is a Phosphoserine. A J domain is found at 113-177 (QYYEILDLKK…NLRAHYDRTG (65 aa)). The chain crosses the membrane as a helical span at residues 263–283 (SIFYQLLPLIVVILFAFLSNF).

The protein localises to the endoplasmic reticulum membrane. This is an uncharacterized protein from Schizosaccharomyces pombe (strain 972 / ATCC 24843) (Fission yeast).